The primary structure comprises 161 residues: Nucleotide-binding protein Daci_4781 (161 aa).

It belongs to the YajQ family.

Its function is as follows. Nucleotide-binding protein. The sequence is that of Nucleotide-binding protein Daci_4781 from Delftia acidovorans (strain DSM 14801 / SPH-1).